Here is a 604-residue protein sequence, read N- to C-terminus: Lipoprotein LpqB (604 aa).

The N-terminal stretch at 1-27 is a signal peptide; that stretch reads MTMRAARLSGSTGLTAALVAVLLVLTG. Residue Cys28 is the site of N-palmitoyl cysteine attachment. Cys28 is lipidated: S-diacylglycerol cysteine. The tract at residues 35 to 60 is disordered; it reads SAPQALGTIDREPTSEGPTPPIAGRD.

It belongs to the LpqB lipoprotein family.

It is found in the cell membrane. This Nocardia farcinica (strain IFM 10152) protein is Lipoprotein LpqB.